Here is a 34-residue protein sequence, read N- to C-terminus: Mytilin-B (34 aa).

Cystine bridges form between cysteine 2-cysteine 27, cysteine 6-cysteine 29, cysteine 10-cysteine 31, and cysteine 15-cysteine 34.

It localises to the secreted. Has antibacterial and antiviral activity. The sequence is that of Mytilin-B from Mytilus edulis (Blue mussel).